Here is a 499-residue protein sequence, read N- to C-terminus: Serine/threonine protein phosphatase 2A 57 kDa regulatory subunit B' beta isoform (499 aa).

Basic residues predominate over residues 1–13 (MFKKIMKGGHRKP). The disordered stretch occupies residues 1-65 (MFKKIMKGGH…PVTATPPPPP (65 aa)).

Belongs to the phosphatase 2A regulatory subunit B56 family. In terms of assembly, PP2A consists of a common heteromeric enzyme, composed of a catalytic subunit (subunits C), a constant regulatory subunit (subunit A), and a variety of regulatory subunits such as subunits B (the R2/B/PR55/B55, R3/B''/PR72/PR130/PR59 and R5/B'/B56 families). Interacts with BZR1. Interacts with BRI1. Interacts with SRK2E/OST1. As to expression, expressed ubiquitously, higher levels in cotyledons and flowers.

It localises to the nucleus. The protein localises to the cytoplasm. Its function is as follows. The B regulatory subunit may modulate substrate selectivity and catalytic activity, and may also direct the localization of the catalytic enzyme to a particular subcellular compartment. Required for the formation of the PP2A holoenzyme that positively regulates brassinosteroid signaling by dephosphorylating and activating BZR1. In Arabidopsis thaliana (Mouse-ear cress), this protein is Serine/threonine protein phosphatase 2A 57 kDa regulatory subunit B' beta isoform (B'BETA).